Here is a 224-residue protein sequence, read N- to C-terminus: Peptidyl-prolyl cis-trans isomerase FKBP3 (224 aa).

An N-acetylalanine modification is found at alanine 2. Serine 36 carries the post-translational modification Phosphoserine. The segment at 87–119 (NVKLNEDKPKETKSEETPDEGPPKYTKSVLKKG) is disordered. Positions 89-102 (KLNEDKPKETKSEE) are enriched in basic and acidic residues. Lysine 99 carries the post-translational modification N6-acetyllysine. Residues 128–224 (GDVVHCWYTG…IFEVELVDID (97 aa)) enclose the PPIase FKBP-type domain. The residue at position 152 (serine 152) is a Phosphoserine. At lysine 170 the chain carries N6-acetyllysine.

The protein belongs to the FKBP-type PPIase family.

The protein resides in the nucleus. The catalysed reaction is [protein]-peptidylproline (omega=180) = [protein]-peptidylproline (omega=0). Its activity is regulated as follows. Inhibited preferentially by rapamycin over FK506. Its function is as follows. FK506- and rapamycin-binding proteins (FKBPs) constitute a family of receptors for the two immunosuppressants which inhibit T-cell proliferation by arresting two distinct cytoplasmic signal transmission pathways. PPIases accelerate the folding of proteins. In Oryctolagus cuniculus (Rabbit), this protein is Peptidyl-prolyl cis-trans isomerase FKBP3 (FKBP3).